We begin with the raw amino-acid sequence, 1102 residues long: MGSDYDSFDDDVADEVLMALDKPATSGLHSREQEQQRDISNATPHTSTDLELEDFGSDAFDYSPERERAKPIQTARNQARTFQQTTLLGRIASQAPEPLGTQPRNSRVFRADLPPEVPTHHALDPEALKTWVYPTNLGPIRDYQFSIVKNGLFNNTLVALPTGLGKTFIAATVILNFFRWTRNAQMVFVAPTKPLASQQVEACLNIAGIPRSQSTLLTGETKPVLREAEWEGKRLFFMTPQTLMNDLSKGYADPKRIVLLVVDEAHRATGDYAYVKVIEFIRRFSKSFRVLALTATPGSTVEGVQDVIDNLGVSHVEIRTEESIDIRNYVHSREIDRVVLEPSDEMLRISELFSQALKPLHSKISQQKIYIGRDPMSITTFGLLKARQDWMKGPGRFANQGLKMMLMAIFTILQSLAHAIKLLNYHGIRPFYDNLVAFRSETEDKGQKGSKYKRQLIGEQSFQEMMDLASKWLKIDGFAGHPKLTHLCDNLLNYFMDAGEGSSTRVIVFSEYRDSAEEITRVLNVHKPMISASLFVGQADSKKSEGMKQKQQIETIAKFRDGIFNVLVATSIGEEGLDIGQVDLIICYDASSSPIRMLQRMGRTGRKRAGKITLLLMKGKEEDNYAKAQDNYEKMQKLICEGSRFNFRHDLSSRIVPRDVKPEVDKRMVEIPIENTQDTSLPEPKARSTRGKKASKKKFNMPDGVETGFNSVASMLGISASKTKAKPNKSPKKAESKETDEISPVPPLEGVLLSVKELAELNKKYRDLPFFHQDTEEICMPSLTARPDLQRVLRPTVHVKHGSYTKRCVRLFKKLSHSQGIETRHTKPHGDTDKSRYLDISVPPFAEDSGEDVVVVPSGRKRSLSPSSAASPPPPGRKRKANTTAAPRSKRQSVVDEYASESEDDTAAARQRKTNAAASPESKRQSVLDEYASESDAEAVTQASEDEESVGSLADFISDGEANGNFPKDMTGFTSDEDDDYRSGSLAKSSLSGPLSGRQVHRSSGAASKSGSTASTAAKPFFVPASLPGTQQTDDDEDMPDIGILVGKKQPETRVRKPAKKSNAVFLSSDDDDDDNDDEDDVQPGPAKRTVRRRVIEDSESG.

The disordered stretch occupies residues 19-55 (ALDKPATSGLHSREQEQQRDISNATPHTSTDLELEDF). The span at 38–49 (DISNATPHTSTD) shows a compositional bias: polar residues. One can recognise a Helicase ATP-binding domain in the interval 147–315 (IVKNGLFNNT…DVIDNLGVSH (169 aa)). 160 to 167 (LPTGLGKT) is an ATP binding site. The DEAH box signature appears at 263 to 266 (DEAH). Positions 490–651 (NLLNYFMDAG…GSRFNFRHDL (162 aa)) constitute a Helicase C-terminal domain. Disordered stretches follow at residues 672-702 (PIEN…FNMP), 720-743 (ASKT…DEIS), 818-837 (SQGI…KSRY), and 858-1102 (SGRK…SESG). The span at 687-699 (RSTRGKKASKKKF) shows a compositional bias: basic residues. Basic and acidic residues predominate over residues 822–837 (ETRHTKPHGDTDKSRY). The segment covering 1003–1019 (SSGAASKSGSTASTAAK) has biased composition (low complexity). The segment covering 1069 to 1082 (SDDDDDDNDDEDDV) has biased composition (acidic residues).

It belongs to the DEAD box helicase family. DEAH subfamily. FANCM sub-subfamily. In terms of assembly, interacts with the MHF histone-fold complex to form the FANCM-MHF complex.

Its subcellular location is the nucleus. The catalysed reaction is ATP + H2O = ADP + phosphate + H(+). Its function is as follows. ATP-dependent DNA helicase involved in DNA damage repair by homologous recombination and in genome maintenance. Capable of unwinding D-loops. Plays a role in limiting crossover recombinants during mitotic DNA double-strand break (DSB) repair. Component of a FANCM-MHF complex which promotes gene conversion at blocked replication forks, probably by reversal of the stalled fork. The polypeptide is ATP-dependent DNA helicase MPH1 (Pyricularia oryzae (strain 70-15 / ATCC MYA-4617 / FGSC 8958) (Rice blast fungus)).